The sequence spans 371 residues: uncharacterized protein (371 aa).

His-76 lines the Zn(2+) pocket. Residue Asp-78 is part of the active site. Zn(2+) is bound at residue Asp-106. Glu-139 (proton acceptor) is an active-site residue. Zn(2+) is bound by residues Glu-140, Asp-163, and His-344.

The protein belongs to the peptidase M20A family. Zn(2+) is required as a cofactor.

Its function is as follows. Could be a peptidase. This is an uncharacterized protein from Bacillus subtilis (strain 168).